The primary structure comprises 333 residues: Methionyl-tRNA formyltransferase (333 aa).

106 to 109 (SLLP) provides a ligand contact to (6S)-5,6,7,8-tetrahydrofolate.

It belongs to the Fmt family.

The enzyme catalyses L-methionyl-tRNA(fMet) + (6R)-10-formyltetrahydrofolate = N-formyl-L-methionyl-tRNA(fMet) + (6S)-5,6,7,8-tetrahydrofolate + H(+). In terms of biological role, attaches a formyl group to the free amino group of methionyl-tRNA(fMet). The formyl group appears to play a dual role in the initiator identity of N-formylmethionyl-tRNA by promoting its recognition by IF2 and preventing the misappropriation of this tRNA by the elongation apparatus. The chain is Methionyl-tRNA formyltransferase from Elusimicrobium minutum (strain Pei191).